Reading from the N-terminus, the 128-residue chain is Cytochrome c-type biogenesis protein CcmE (128 aa).

Topologically, residues 1–8 are cytoplasmic; sequence MQKRVRNR. Residues 9–29 traverse the membrane as a helical; Signal-anchor for type II membrane protein segment; it reads LITIIICFCSACLGISIILYN. Residues 30–128 are Periplasmic-facing; it reads LEKNIVFFLP…KHDENYRPPQ (99 aa). 2 residues coordinate heme: His-120 and Tyr-124.

Belongs to the CcmE/CycJ family.

Its subcellular location is the cell inner membrane. Functionally, heme chaperone required for the biogenesis of c-type cytochromes. Transiently binds heme delivered by CcmC and transfers the heme to apo-cytochromes in a process facilitated by CcmF and CcmH. The polypeptide is Cytochrome c-type biogenesis protein CcmE (Rickettsia peacockii (strain Rustic)).